A 638-amino-acid chain; its full sequence is MEKIKVKIKGKEYEVEKGTPLGKIFELAGIKDALGGVINGKIIDLQTPVRESGEIKPVYRGSKESLEIMRHSLAHIMAQALKELYGAKKVHLGVGPTTEEGFYYDVEVEGHKITEEDLPKIEQKMKEIIERDYPILRRELSREEAIKLFDKLKEKYKIDIIKEIPEEEVISVYEQGDFIDLCKGPHLPSTGKAGAFKLTSISGAYWKGRSDQPQLTRIYGIAYWSDKEVKERLKFYEEVKKRDHRRLGKELEFFTIDDNVGAGLILWLPRGAIYRKVLEDYLREEHLKRGYQLVYTPHVGKSKLWETSGHLECYKQNMFPSMKIDEEEYYVKPMNCPFHIAIYKSRTRSYKELPLKLFELGTVYRYELSGVLHGLLRVRGFTQDDAHIVCTPEQVNDVIRETLDFALSTLKDFGFNEFKIYLSTRPEYSIGSDEQWEVSQNALKKAIEDLGYEYEIDEGGGAFYGPKIDVKIRDAIGRMWQLSTIQFDFNLPERFDMTYVGPDNKKHRPYMIHRALLGSIERFTGILLEHYAGLLPIWLSPTQVMIIPIADRHHEYAKKVYEFLKENGIRAEMDLREERMNAKIRDAELKKIPVILVVGDREAQNNTVSVRTKKEGNLGSMELNKFLDWIKEKIKNKE.

A TGS domain is found at 1–59 (MEKIKVKIKGKEYEVEKGTPLGKIFELAGIKDALGGVINGKIIDLQTPVRESGEIKPVY). The tract at residues 243–536 (DHRRLGKELE…LLEHYAGLLP (294 aa)) is catalytic. Positions 336, 387, and 513 each coordinate Zn(2+).

This sequence belongs to the class-II aminoacyl-tRNA synthetase family. As to quaternary structure, homodimer. Zn(2+) serves as cofactor.

It localises to the cytoplasm. The enzyme catalyses tRNA(Thr) + L-threonine + ATP = L-threonyl-tRNA(Thr) + AMP + diphosphate + H(+). In terms of biological role, catalyzes the attachment of threonine to tRNA(Thr) in a two-step reaction: L-threonine is first activated by ATP to form Thr-AMP and then transferred to the acceptor end of tRNA(Thr). Also edits incorrectly charged L-seryl-tRNA(Thr). In Aquifex aeolicus (strain VF5), this protein is Threonine--tRNA ligase.